The following is a 91-amino-acid chain: Large ribosomal subunit protein bL31B (91 aa).

The protein belongs to the bacterial ribosomal protein bL31 family. Type B subfamily. In terms of assembly, part of the 50S ribosomal subunit.

The chain is Large ribosomal subunit protein bL31B from Neisseria gonorrhoeae (strain ATCC 700825 / FA 1090).